Reading from the N-terminus, the 164-residue chain is Cytochrome c-type biogenesis protein CcmE (164 aa).

The Cytoplasmic portion of the chain corresponds to 1-8 (MNPRRQKR). The helical; Signal-anchor for type II membrane protein transmembrane segment at 9–29 (LIVISAIVLVIGAAIGLMLYA) threads the bilayer. Over 30–164 (LSQNIDLFYT…QAYSTPKVSG (135 aa)) the chain is Periplasmic. Residues His132 and Tyr136 each contribute to the heme site.

It belongs to the CcmE/CycJ family.

It is found in the cell inner membrane. In terms of biological role, heme chaperone required for the biogenesis of c-type cytochromes. Transiently binds heme delivered by CcmC and transfers the heme to apo-cytochromes in a process facilitated by CcmF and CcmH. The chain is Cytochrome c-type biogenesis protein CcmE from Pseudoalteromonas atlantica (strain T6c / ATCC BAA-1087).